Reading from the N-terminus, the 296-residue chain is Phosphoribosylaminoimidazole-succinocarboxamide synthase (296 aa).

The protein belongs to the SAICAR synthetase family.

It carries out the reaction 5-amino-1-(5-phospho-D-ribosyl)imidazole-4-carboxylate + L-aspartate + ATP = (2S)-2-[5-amino-1-(5-phospho-beta-D-ribosyl)imidazole-4-carboxamido]succinate + ADP + phosphate + 2 H(+). It participates in purine metabolism; IMP biosynthesis via de novo pathway; 5-amino-1-(5-phospho-D-ribosyl)imidazole-4-carboxamide from 5-amino-1-(5-phospho-D-ribosyl)imidazole-4-carboxylate: step 1/2. The protein is Phosphoribosylaminoimidazole-succinocarboxamide synthase of Geotalea uraniireducens (strain Rf4) (Geobacter uraniireducens).